A 234-amino-acid chain; its full sequence is uncharacterized protein (234 aa).

A disordered region spans residues 1-23 (MVDQIRSPSWKSGFPSHQHQQGS).

This is an uncharacterized protein from Caenorhabditis elegans.